A 98-amino-acid polypeptide reads, in one-letter code: uncharacterized protein (98 aa).

A disordered region spans residues 53-98 (AALEGGRHRHRGESASGNGIQHGVPPNVALIPSGSTLLTPARSGHV).

This is an uncharacterized protein from Mycolicibacterium smegmatis (strain ATCC 700084 / mc(2)155) (Mycobacterium smegmatis).